The following is a 125-amino-acid chain: Desulfoferrodoxin (125 aa).

Residues histidine 49, histidine 69, histidine 75, cysteine 115, and histidine 118 each contribute to the Fe cation site.

It belongs to the desulfoferrodoxin family. It depends on Cu(2+) as a cofactor.

The enzyme catalyses reduced [rubredoxin] + superoxide + 2 H(+) = oxidized [rubredoxin] + H2O2. Functionally, catalyzes the reduction of superoxide to hydrogen peroxide, using electrons from NADH and NADH:rubredoxin oxidoreductase (NROR) and rubredoxin (Rd) as electron transport intermediaries between NADH and Dfx. Is a key factor in the superoxide reductase dependent part of a pathway for detoxification of reactive oxygen species (ROS) in C.acetobutylicum, an obligate anaerobic bacterium. The protein is Desulfoferrodoxin (dfx) of Clostridium acetobutylicum (strain ATCC 824 / DSM 792 / JCM 1419 / IAM 19013 / LMG 5710 / NBRC 13948 / NRRL B-527 / VKM B-1787 / 2291 / W).